The sequence spans 88 residues: LYR motif-containing protein 2 (88 aa).

A mitochondrion-targeting transit peptide spans 1-19; the sequence is MATSRLPPATLTLKQFMRR.

Belongs to the complex I LYR family.

It is found in the mitochondrion. Its function is as follows. Involved in efficient integration of the N-module into mitochondrial respiratory chain complex I. The sequence is that of LYR motif-containing protein 2 (LYRM2) from Bos taurus (Bovine).